Reading from the N-terminus, the 88-residue chain is UPF0297 protein LACR_0137 (88 aa).

Belongs to the UPF0297 family.

The polypeptide is UPF0297 protein LACR_0137 (Lactococcus lactis subsp. cremoris (strain SK11)).